Here is an 80-residue protein sequence, read N- to C-terminus: Conotoxin Ca11.3 (80 aa).

Positions 1–19 (MKLVLAIVVILMLLSLSTG) are cleaved as a signal peptide. Positions 20-42 (AEMSDNHASRSATALRDRLLSPK) are excised as a propeptide. 4 disulfides stabilise this stretch: Cys-46–Cys-60, Cys-53–Cys-65, Cys-59–Cys-72, and Cys-64–Cys-79.

Belongs to the conotoxin I3 superfamily. Expressed by the venom duct.

It localises to the secreted. The polypeptide is Conotoxin Ca11.3 (Conus caracteristicus (Characteristic cone)).